Consider the following 438-residue polypeptide: Glutamyl-tRNA reductase (438 aa).

Substrate contacts are provided by residues 49–52 (TCNR), serine 109, 114–116 (EGQ), and glutamine 120. The active-site Nucleophile is the cysteine 50. Residue 197–202 (GAGKMS) coordinates NADP(+).

This sequence belongs to the glutamyl-tRNA reductase family. Homodimer.

The enzyme catalyses (S)-4-amino-5-oxopentanoate + tRNA(Glu) + NADP(+) = L-glutamyl-tRNA(Glu) + NADPH + H(+). It participates in porphyrin-containing compound metabolism; protoporphyrin-IX biosynthesis; 5-aminolevulinate from L-glutamyl-tRNA(Glu): step 1/2. Its pathway is porphyrin-containing compound metabolism; chlorophyll biosynthesis. Catalyzes the NADPH-dependent reduction of glutamyl-tRNA(Glu) to glutamate 1-semialdehyde (GSA). In Synechococcus elongatus (strain ATCC 33912 / PCC 7942 / FACHB-805) (Anacystis nidulans R2), this protein is Glutamyl-tRNA reductase.